Consider the following 438-residue polypeptide: Serine--tRNA ligase (438 aa).

Residue 243–245 (TAE) coordinates L-serine. 274–276 (RSE) is a binding site for ATP. Glu297 is an L-serine binding site. Residue 361 to 364 (EISS) coordinates ATP. Ser396 serves as a coordination point for L-serine.

It belongs to the class-II aminoacyl-tRNA synthetase family. Type-1 seryl-tRNA synthetase subfamily. In terms of assembly, homodimer. The tRNA molecule binds across the dimer.

It localises to the cytoplasm. It carries out the reaction tRNA(Ser) + L-serine + ATP = L-seryl-tRNA(Ser) + AMP + diphosphate + H(+). The catalysed reaction is tRNA(Sec) + L-serine + ATP = L-seryl-tRNA(Sec) + AMP + diphosphate + H(+). Its pathway is aminoacyl-tRNA biosynthesis; selenocysteinyl-tRNA(Sec) biosynthesis; L-seryl-tRNA(Sec) from L-serine and tRNA(Sec): step 1/1. Catalyzes the attachment of serine to tRNA(Ser). Is also able to aminoacylate tRNA(Sec) with serine, to form the misacylated tRNA L-seryl-tRNA(Sec), which will be further converted into selenocysteinyl-tRNA(Sec). This Ralstonia pickettii (strain 12J) protein is Serine--tRNA ligase.